A 517-amino-acid chain; its full sequence is MFS efflux transporter inpD (517 aa).

Positions 1-24 (MEKTQTPSLTPDELSARSSTPFEE) are disordered. 5 consecutive transmembrane segments (helical) span residues 37 to 57 (LKFSFIFVGLCLSVFQVALSL), 59 to 79 (DIGWYGSAYLFTDCAFQLVFG), 89 to 109 (IVYLGALLLFEIGSIICATAP), 112 to 132 (IALILGRTIAGIGAGGILSGA), and 151 to 171 (ILGAVNGIAFICGPLLAGGII). Asn-172 carries N-linked (GlcNAc...) asparagine glycosylation. A run of 9 helical transmembrane segments spans residues 178–198 (WIFYINPIISAPTFFITVFLL), 219–239 (LPAFTLFLGSILCLILALLWG), 247–267 (NARIIVLFILFGVIMLAFMLV), 292–312 (FFSFCTSGTGFILEYYLPIWL), 328–348 (LPIIAAAVVFTTLCGILTPVI), 352–372 (VPFMIIATMLLSVGMGLLSTL), 381–401 (VLGFQVPAGVGLGCALQQTLV), 412–432 (IPIGVSLIVLAQTLGGTIALS), and 485–505 (AIVKTWYLSIGLAAASIIGVL).

It belongs to the major facilitator superfamily.

It localises to the cell membrane. MFS efflux transporter; part of the inp gene cluster that mediates the biosynthesis of fellutamide B, a mycotoxin that acts as a proteasome inhibitor. In the first step of fellutabmide B biosynthesis inpC activates 3-hydroxydodecanoic acid to generate 3-hydroxydodecanoyl-AMP that is then loaded onto the T0 domain of inpB. The 3-hydroxydodecanoyl-S-phosphopantetheinyl-T0 is sequentially extended with L-Asn and L-Gln by the two CAT modules of inpB. The linear lipodipeptide from inpB is then transferred onto inpA for the addition of the third amino acid, L-Leu. Reductive releasing of the lipotripeptide by the TE domain of inpA produces (2S)-fellutamide B. InpF might be involved in the release and transfer of the lipodipeptide from inpB to inpA. The inp cluster-encoded proteasome subunit inpE confers resistance to internally produced fellutamides. The MFS efflux transporter inpD may contribute to fellutamide resistance as well. The sequence is that of MFS efflux transporter inpD from Emericella nidulans (strain FGSC A4 / ATCC 38163 / CBS 112.46 / NRRL 194 / M139) (Aspergillus nidulans).